A 207-amino-acid polypeptide reads, in one-letter code: Ribosomal RNA large subunit methyltransferase E (207 aa).

Gly60, Trp62, Asp80, Asp96, and Asp121 together coordinate S-adenosyl-L-methionine. Lys161 functions as the Proton acceptor in the catalytic mechanism.

This sequence belongs to the class I-like SAM-binding methyltransferase superfamily. RNA methyltransferase RlmE family.

The protein localises to the cytoplasm. It catalyses the reaction uridine(2552) in 23S rRNA + S-adenosyl-L-methionine = 2'-O-methyluridine(2552) in 23S rRNA + S-adenosyl-L-homocysteine + H(+). Its function is as follows. Specifically methylates the uridine in position 2552 of 23S rRNA at the 2'-O position of the ribose in the fully assembled 50S ribosomal subunit. This is Ribosomal RNA large subunit methyltransferase E from Azotobacter vinelandii (strain DJ / ATCC BAA-1303).